Here is a 250-residue protein sequence, read N- to C-terminus: uncharacterized protein (250 aa).

The N-terminal stretch at 1 to 19 (MAKPRNAAESKAAKAQANA) is a signal peptide. A run of 2 helical transmembrane segments spans residues 51–71 (IGAF…AGGF) and 73–93 (MFTM…VIFG). Residues 226 to 250 (AGVMPKGPLPTTAKMRSVQRTVRRK) form a disordered region.

The protein localises to the cell membrane. This is an uncharacterized protein from Mycobacterium tuberculosis (strain CDC 1551 / Oshkosh).